Consider the following 577-residue polypeptide: MAELLPGYSPSFKKPSEILRLSRRRSRSEASKAGVSPFSPGDVTKRVPGLRPFSPGPNKGAGVKRRNPFANLENTVCSPVKRRAESVPECASPEPRALVAARPSCWELGSPSPQPPQFNSVEDVIWGDPLADPLVKTESPEKPATACETPKGSVTFPADWSLKTRLLFTSSQSFSWADHLKAQEEAQGLVMHCRATAVSLPHSIQEPKLSTELRCAFQQSLVHWVHPSFPWVQLFPRIGIDRKMVGKNSPWSHDESLQQVIMSEWALSFTSLYNLLKAKLCPYFYVCTYQFTVLFRAAGLAGSDVITAVMSPTTRGLREAMKNEGITFTQPLVEEDPSKKQKNSEANSQGDITPKKENGNTETDEVSDESDEDESFSWLEEMGVEDKIKKPDSISIKLRKEKNEVKLDHKPESVVLVKGTNTFTLLNFLINCKSIVAAAGPQAGLPPTLLSPVAFRGATMQTLKARSVNVKTQVRSGYKDQFSLEITGPIMPHSLHSLTMLLQSAQRGSFSAGFYSHDPTAVFNTPIHPQAAKEISADLQNCGLHPSTVEQLSQVNQLGKLSLRHLELSDYRYTWKS.

Disordered stretches follow at residues 1–67 (MAEL…KRRN) and 328–382 (FTQP…LEEM). A compositionally biased stretch (acidic residues) spans 362–375 (ETDEVSDESDEDES).

This sequence belongs to the DONSON family. As to quaternary structure, component of the replisome complex.

It is found in the nucleus. Replisome component that maintains genome stability by protecting stalled or damaged replication forks. After the induction of replication stress, required for the stabilization of stalled replication forks, the efficient activation of the intra-S-phase and G/2M cell-cycle checkpoints and the maintenance of genome stability. The protein is Protein downstream neighbor of son homolog of Xenopus tropicalis (Western clawed frog).